Consider the following 551-residue polypeptide: Chaperonin GroEL (551 aa).

Residues 30–33, K51, 87–91, G415, 479–481, and D495 contribute to the ATP site; these read TLGP, DGTTT, and NAA. A disordered region spans residues 523–551; sequence DSPKEDKSSDMPSPSAGGMGGMGGMGGMM. Gly residues predominate over residues 539-551; the sequence is GGMGGMGGMGGMM.

This sequence belongs to the chaperonin (HSP60) family. Forms a cylinder of 14 subunits composed of two heptameric rings stacked back-to-back. Interacts with the co-chaperonin GroES.

It localises to the cytoplasm. The catalysed reaction is ATP + H2O + a folded polypeptide = ADP + phosphate + an unfolded polypeptide.. Together with its co-chaperonin GroES, plays an essential role in assisting protein folding. The GroEL-GroES system forms a nano-cage that allows encapsulation of the non-native substrate proteins and provides a physical environment optimized to promote and accelerate protein folding. The chain is Chaperonin GroEL from Buchnera aphidicola subsp. Chaetophorus leucomelas.